The sequence spans 192 residues: Ribosomal RNA small subunit methyltransferase G (192 aa).

Residues Gly-63, Phe-68, 112-113 (IE), and Arg-125 each bind S-adenosyl-L-methionine.

It belongs to the methyltransferase superfamily. RNA methyltransferase RsmG family.

It is found in the cytoplasm. The enzyme catalyses guanosine(527) in 16S rRNA + S-adenosyl-L-methionine = N(7)-methylguanosine(527) in 16S rRNA + S-adenosyl-L-homocysteine. In terms of biological role, specifically methylates the N7 position of guanine in position 527 of 16S rRNA. This chain is Ribosomal RNA small subunit methyltransferase G, found in Rickettsia bellii (strain OSU 85-389).